Consider the following 730-residue polypeptide: MYPSPVRHPAAGGPPPQGPIKFTIADTLERIKEEFNFLQAQYHSIKLECEKLSNEKTEMQRHYVMYYEMSYGLNVEMHKQTEIAKRLNTLINQLLPFLQADHQQQVLQAVERAKQVTMQELNLIIGHQQQHGIQQLLQQIHAQQVPGGPPQPMGALNPFGALGATMGLPHGPQGLLNKPPEHHRPDIKPTGLEGPAAAEERLRNSVSPADREKYRTRSPLDIENDSKRRKDEKLQEDEGEKSDQDLVVDVANEMESHSPRPNGEHVSMEVRDRESLNGERLEKPSSSGIKQERPPSRSGSSSSRSTPSLKTKDMEKPGTPGAKARTPTPNAAAPAPGVNPKQMMPQGPPPAGYPGAPYQRPADPYQRPPSDPAYGRPPPMPYDPHAHVRTNGIPHPSALTGGKPAYSFHMNGEGSLQPVPFPPDALVGVGIPRHARQINTLSHGEVVCAVTISNPTKYVYTGGKGCVKVWDISQPGNKNPVSQLDCLQRDNYIRSVKLLPDGRTLIVGGEASNLSIWDLASPTPRIKAELTSAAPACYALAISPDSKVCFSCCSDGNIAVWDLHNEILVRQFQGHTDGASCIDISPDGSRLWTGGLDNTVRSWDLREGRQLQQHDFSSQIFSLGYCPTGDWLAVGMENSHVEVLHASKPDKYQLHLHESCVLSLRFAACGKWFVSTGKDNLLNAWRTPYGASIFQSKETSSVLSCDISTDDKYIVTGSGDKKATVYEVIY.

The tract at residues 144-411 is disordered; it reads QVPGGPPQPM…GKPAYSFHMN (268 aa). Basic and acidic residues predominate over residues 198 to 233; it reads AEERLRNSVSPADREKYRTRSPLDIENDSKRRKDEK. Phosphoserine is present on residues serine 205, serine 207, and serine 218. Residues 206–267 are CCN domain; it reads VSPADREKYR…SPRPNGEHVS (62 aa). The Nuclear localization signal signature appears at 227-230; that stretch reads KRRK. A Phosphoserine; by CK2 modification is found at serine 242. A compositionally biased stretch (basic and acidic residues) spans 254-283; sequence MESHSPRPNGEHVSMEVRDRESLNGERLEK. Serine 258 carries the post-translational modification Phosphoserine; by CDC2. A binding to basic helix-loop-helix domain region spans residues 262 to 425; sequence NGEHVSMEVR…LQPVPFPPDA (164 aa). The residue at position 267 (serine 267) is a Phosphoserine. Low complexity-rich tracts occupy residues 296-308, 322-345, and 353-362; these read SRSGSSSSRSTPS, AKARTPTPNAAAPAPGVNPKQMMP, and YPGAPYQRPA. 2 positions are modified to phosphothreonine: threonine 326 and threonine 328. A compositionally biased stretch (pro residues) spans 366 to 382; sequence QRPPSDPAYGRPPPMPY. WD repeat units lie at residues 442–480, 488–527, 532–571, 574–613, 615–654, 656–695, and 697–730; these read SHGEVVCAVTISNPTKYVYTGGKGCVKVWDISQPGNKNP, QRDNYIRSVKLLPDGRTLIVGGEASNLSIWDLASPTPRIK, SAAPACYALAISPDSKVCFSCCSDGNIAVWDLHNEILVRQ, GHTDGASCIDISPDGSRLWTGGLDNTVRSWDLREGRQLQQ, DFSSQIFSLGYCPTGDWLAVGMENSHVEVLHASKPDKYQL, LHESCVLSLRFAACGKWFVSTGKDNLLNAWRTPYGASIFQ, and KETSSVLSCDISTDDKYIVTGSGDKKATVYEVIY.

The protein belongs to the WD repeat Groucho/TLE family. Forms a complex with the hairy/Enhancer of split/deadpan family of basic helix-loop-helix proteins in order to repress transcription. Its activity in regulating transcription depends on other proteins as it lacks a DNA-binding motif. Interacts with hairy/hry (via WRPW motif). Ubiquitinated by XIAP/BIRC4. Ubiquitinated by hyd in response to Wnt signaling, leading to degradation by the proteasome.

It localises to the nucleus. Transcriptional corepressor that regulates transcription when recruited to specific target DNA by hairy-related bHLH proteins. Maternally required for neurogenesis; in the segregation of the neuroectoderm. Directly or indirectly interacts with Notch and Delta. In Drosophila melanogaster (Fruit fly), this protein is Protein groucho (gro).